A 273-amino-acid polypeptide reads, in one-letter code: Outer surface protein A (273 aa).

The N-terminal stretch at 1-16 (MKKYLLGIGLILALIA) is a signal peptide. Cys-17 is lipidated: N-palmitoyl cysteine. A lipid anchor (S-diacylglycerol cysteine) is attached at Cys-17.

It belongs to the OspA lipoprotein family.

Its subcellular location is the cell outer membrane. It localises to the cell surface. In Borreliella burgdorferi (Lyme disease spirochete), this protein is Outer surface protein A.